The sequence spans 429 residues: Phosphoglucosamine mutase (429 aa).

S96 acts as the Phosphoserine intermediate in catalysis. Mg(2+) is bound by residues S96, D230, D232, and D234. S96 carries the post-translational modification Phosphoserine.

The protein belongs to the phosphohexose mutase family. It depends on Mg(2+) as a cofactor. In terms of processing, activated by phosphorylation.

It carries out the reaction alpha-D-glucosamine 1-phosphate = D-glucosamine 6-phosphate. Its function is as follows. Catalyzes the conversion of glucosamine-6-phosphate to glucosamine-1-phosphate. This is Phosphoglucosamine mutase from Thermotoga maritima (strain ATCC 43589 / DSM 3109 / JCM 10099 / NBRC 100826 / MSB8).